Reading from the N-terminus, the 585-residue chain is Rhizobactin siderophore biosynthesis protein RhbC (585 aa).

The protein belongs to the IucA/IucC family.

The protein operates within siderophore biosynthesis; rhizobactin biosynthesis. This Rhizobium meliloti (strain 1021) (Ensifer meliloti) protein is Rhizobactin siderophore biosynthesis protein RhbC (rhbC).